Reading from the N-terminus, the 341-residue chain is GTPase Obg (341 aa).

The Obg domain occupies 1-159 (MKFVDEALIK…RNLRLELRVL (159 aa)). The segment at 128-150 (TRYKSSVNRSPRQTTPGSPGESR) is disordered. Polar residues predominate over residues 129-144 (RYKSSVNRSPRQTTPG). The region spanning 160-334 (ADVGLLGLPN…LCYALMQLID (175 aa)) is the OBG-type G domain. Residues 166–173 (GLPNAGKS), 191–195 (FTTLH), 213–216 (DIPG), 283–286 (NKID), and 315–317 (SAI) each bind GTP. Mg(2+)-binding residues include Ser173 and Thr193.

It belongs to the TRAFAC class OBG-HflX-like GTPase superfamily. OBG GTPase family. In terms of assembly, monomer. It depends on Mg(2+) as a cofactor.

Its subcellular location is the cytoplasm. Its function is as follows. An essential GTPase which binds GTP, GDP and possibly (p)ppGpp with moderate affinity, with high nucleotide exchange rates and a fairly low GTP hydrolysis rate. Plays a role in control of the cell cycle, stress response, ribosome biogenesis and in those bacteria that undergo differentiation, in morphogenesis control. This is GTPase Obg from Legionella pneumophila (strain Paris).